The chain runs to 254 residues: uncharacterized protein (254 aa).

This is an uncharacterized protein from Caenorhabditis elegans.